The primary structure comprises 71 residues: Peptide Ctri10261 (71 aa).

A signal peptide spans Met-1–Ala-23. Phe-37 is subject to Phenylalanine amide. The propeptide occupies Ser-41–Tyr-71.

The protein belongs to the non-disulfide-bridged peptide (NDBP) superfamily. Short antimicrobial peptide (group 4) family. Expressed by the venom gland.

The protein localises to the secreted. In terms of biological role, antimicrobial peptide. This chain is Peptide Ctri10261, found in Chaerilus tricostatus (Scorpion).